Reading from the N-terminus, the 287-residue chain is MAQKFVPEAAELCENSLKKFISLIGTVDKLLVISGAGISTESGIPDYRSKDVGLYARIAHKPIYFQDYMRSNRCRQRYWSRNFLAWPRFGQAAPNINHYALSKWEASDRFQWLITQNVDGLHLKAGSKMVTELHGSALQVKCTTCDYIESRQTYQDRLDYANPGFKEEHVAPGELAPDGDIILPLGTEKGFQIPECPSCGGLMKTDVTFFGENVNMDKVNFCYEKVNECDGILSLGTSLAVLSGFRFIHHANMKKKPIFIVNIGPTRADHMATMKLDYKISDVLKEM.

In terms of domain architecture, Deacetylase sirtuin-type spans 10–287; it reads AELCENSLKK…YKISDVLKEM (278 aa). Residues 35–55 and 116–119 contribute to the NAD(+) site; these read GAGI…VGLY and QNVD. The active-site Proton acceptor is histidine 134. Residues cysteine 142, cysteine 145, cysteine 196, and cysteine 199 each contribute to the Zn(2+) site. Residues 236 to 238, 262 to 264, and isoleucine 280 contribute to the NAD(+) site; these read GTS and NIG.

This sequence belongs to the sirtuin family. Class II subfamily. Interacts with pyc-1, pcca-1 and mccc-1. Zn(2+) is required as a cofactor. In terms of tissue distribution, ubiquitously expressed with high expression in the pharynx, body wall muscles and gonad.

Its subcellular location is the mitochondrion matrix. The protein localises to the mitochondrion. The enzyme catalyses N(6)-acetyl-L-lysyl-[protein] + NAD(+) + H2O = 2''-O-acetyl-ADP-D-ribose + nicotinamide + L-lysyl-[protein]. Its function is as follows. NAD-dependent protein deacylase. Catalyzes the NAD-dependent hydrolysis of acyl groups from lysine residues. Plays a role in oxidative stress resistance. In Caenorhabditis elegans, this protein is NAD-dependent protein deacylase sir-2.2 (sir-2.2).